The primary structure comprises 258 residues: Probable parvulin-type peptidyl-prolyl cis-trans isomerase (258 aa).

The first 19 residues, 1–19, serve as a signal peptide directing secretion; it reads MKRIAMLAAACVIAVPAFA. The region spanning 127–219 is the PpiC domain; it reads KMEYKVRHIL…FGWHVIQVDD (93 aa).

The protein belongs to the PpiC/parvulin rotamase family.

The enzyme catalyses [protein]-peptidylproline (omega=180) = [protein]-peptidylproline (omega=0). This chain is Probable parvulin-type peptidyl-prolyl cis-trans isomerase, found in Bordetella parapertussis (strain 12822 / ATCC BAA-587 / NCTC 13253).